Here is a 133-residue protein sequence, read N- to C-terminus: MEAFLGTWKMEKSEGFDKIMERLGVDFVTRKMGNLVKPNLIVTDLGGGKYKMRSESTFKTTECSFKLGEKFKEVTPDSREVASLITVENGVMKHEQDDKTKVTYIERVVEGNELKATVKVDEVVCVRTYSKVA.

Met-1 carries the N-acetylmethionine modification. Hexadecanoate-binding positions include Arg-107 and 127-129; that span reads RTY.

Belongs to the calycin superfamily. Fatty-acid binding protein (FABP) family.

Has been implicated in the acquisition, storage, and transport of lipids, and may be important to the organism since it is incapable of synthesizing most of its lipids de novo. This chain is Fatty acid-binding protein homolog 1 (FABP1), found in Echinococcus granulosus (Hydatid tapeworm).